The sequence spans 244 residues: Eukaryotic translation initiation factor 4E type 1B (244 aa).

Residues 1-26 are compositionally biased toward basic and acidic residues; it reads MNKVEGGGHKEEVVVKEKEVVKEKPS. Residues 1-57 are disordered; sequence MNKVEGGGHKEEVVVKEKEVVKEKPSEATAEGVQAGEAKDLPGSLKTQRRKAHREHP. The segment at 65–68 is EIF4EBP1/2/3 binding; it reads HPLQ. 84–85 is a binding site for mRNA; the sequence is WQ. Residues 101–105 are EIF4EBP1/2/3 binding; the sequence is WAVYS. 130–131 contacts mRNA; sequence WE. Positions 160–167 are EIF4EBP1/2/3 binding; it reads ETLLCLVG. MRNA contacts are provided by residues 185–190 and 233–235; these read RTKRDK and AKS.

This sequence belongs to the eukaryotic initiation factor 4E family. As to quaternary structure, EIF4F is a multi-subunit complex, the composition of which varies with external and internal environmental conditions. It is composed of at least EIF4A, EIF4E and EIF4G.

Recognizes and binds the 7-methylguanosine-containing mRNA cap during an early step in the initiation of protein synthesis and facilitates ribosome binding by inducing the unwinding of the mRNAs secondary structures. The polypeptide is Eukaryotic translation initiation factor 4E type 1B (Eif4e1b) (Mus musculus (Mouse)).